We begin with the raw amino-acid sequence, 159 residues long: MAKTKKHLLTQEGLKKLQAELRLLVDVKRADVIKLIQEAREQGDLSENADYDSAKATQSEIESRITEIQDILNHYEIIKEVDTKNKRVIVGAKVTIHDHSDECNYTYEIVGPIESDPAENKISHESPVAKAIMDKKEGESAEVIGIEHPYKVTIKKIVL.

Belongs to the GreA/GreB family.

In terms of biological role, necessary for efficient RNA polymerase transcription elongation past template-encoded arresting sites. The arresting sites in DNA have the property of trapping a certain fraction of elongating RNA polymerases that pass through, resulting in locked ternary complexes. Cleavage of the nascent transcript by cleavage factors such as GreA or GreB allows the resumption of elongation from the new 3'terminus. GreA releases sequences of 2 to 3 nucleotides. The polypeptide is Transcription elongation factor GreA (Mycoplasmoides gallisepticum (strain R(low / passage 15 / clone 2)) (Mycoplasma gallisepticum)).